Here is a 122-residue protein sequence, read N- to C-terminus: NADH-quinone oxidoreductase subunit A (122 aa).

3 helical membrane passes run 12–32 (ILLF…AGWL), 67–87 (IAIL…WAVV), and 91–111 (IGWF…VGFI).

Belongs to the complex I subunit 3 family. NDH-1 is composed of 14 different subunits. Subunits NuoA, H, J, K, L, M, N constitute the membrane sector of the complex.

The protein resides in the cell inner membrane. It catalyses the reaction a quinone + NADH + 5 H(+)(in) = a quinol + NAD(+) + 4 H(+)(out). Functionally, NDH-1 shuttles electrons from NADH, via FMN and iron-sulfur (Fe-S) centers, to quinones in the respiratory chain. The immediate electron acceptor for the enzyme in this species is believed to be ubiquinone. Couples the redox reaction to proton translocation (for every two electrons transferred, four hydrogen ions are translocated across the cytoplasmic membrane), and thus conserves the redox energy in a proton gradient. This Nitrosomonas europaea (strain ATCC 19718 / CIP 103999 / KCTC 2705 / NBRC 14298) protein is NADH-quinone oxidoreductase subunit A.